Consider the following 701-residue polypeptide: Polyribonucleotide nucleotidyltransferase (701 aa).

Residues Asp487 and Asp493 each contribute to the Mg(2+) site. The KH domain occupies 554–613; sequence PTMLQMKIDSDKIRDVIGKGGATIRAICEETKASIDIEDDGSVKIYGETKEAAEAAKQRV. Residues 623–691 form the S1 motif domain; sequence GKIYVGKVER…NRGRIKLSIK (69 aa).

This sequence belongs to the polyribonucleotide nucleotidyltransferase family. Component of the RNA degradosome, which is a multiprotein complex involved in RNA processing and mRNA degradation. Mg(2+) serves as cofactor.

The protein resides in the cytoplasm. The enzyme catalyses RNA(n+1) + phosphate = RNA(n) + a ribonucleoside 5'-diphosphate. In terms of biological role, involved in mRNA degradation. Catalyzes the phosphorolysis of single-stranded polyribonucleotides processively in the 3'- to 5'-direction. The polypeptide is Polyribonucleotide nucleotidyltransferase (Pseudomonas paraeruginosa (strain DSM 24068 / PA7) (Pseudomonas aeruginosa (strain PA7))).